A 346-amino-acid chain; its full sequence is Low specificity L-threonine aldolase (346 aa).

Lys-207 bears the N6-(pyridoxal phosphate)lysine mark.

The protein belongs to the threonine aldolase family. Homotetramer. Pyridoxal 5'-phosphate serves as cofactor.

It carries out the reaction L-threonine = acetaldehyde + glycine. The enzyme catalyses L-allo-threonine = acetaldehyde + glycine. In terms of biological role, catalyzes the cleavage of L-allo-threonine and L-threonine to glycine and acetaldehyde. The chain is Low specificity L-threonine aldolase (ltaE) from Pseudomonas aeruginosa (strain ATCC 15692 / DSM 22644 / CIP 104116 / JCM 14847 / LMG 12228 / 1C / PRS 101 / PAO1).